Consider the following 1193-residue polypeptide: Structural maintenance of chromosomes protein 3 homolog (1193 aa).

ATP is bound at residue 31 to 38 (GFNGSGKS). Lysine 101 carries the post-translational modification N6-acetyllysine. 2 coiled-coil regions span residues 179–286 (SKKV…LNKT) and 332–483 (ILRV…EIIK). In terms of domain architecture, SMC hinge spans 505–631 (ENILGFLIDN…VKSLESCENY (127 aa)). Residues 665–993 (TVYNKLKELK…SHKNIKDMIQ (329 aa)) are a coiled coil.

It belongs to the SMC family. SMC3 subfamily. In terms of assembly, component of the cohesin complex. Post-translationally, acetylation at Lys-101 by ESCO1 is important for genome stability and S phase sister chromatid cohesion.

The protein localises to the nucleus. In terms of biological role, central component of cohesin, a complex required for chromosome cohesion during the cell cycle. The cohesin complex may form a large proteinaceous ring within which sister chromatids can be trapped. At anaphase, the complex is cleaved and dissociates from chromatin, allowing sister chromatids to segregate. Cohesion is coupled to DNA replication and is involved in DNA repair. The cohesin complex also plays an important role in spindle pole assembly during mitosis and in chromosomes movement. The chain is Structural maintenance of chromosomes protein 3 homolog from Plasmodium falciparum (isolate 3D7).